The primary structure comprises 351 residues: Cytoplasmic dynein 2 light intermediate chain 1 (351 aa).

Residues 304–351 (TLKDVKDPAKDPQYAESEVDEMRIQKDQELEQYKRSSSKSWKQIELDS) form a disordered region. Over residues 323–337 (DEMRIQKDQELEQYK) the composition is skewed to basic and acidic residues.

Belongs to the dynein light intermediate chain family. In terms of assembly, light intermediate chain of the cytoplasmic dynein complex 2, a multisubunit complex composed at least of eleven different proteins. The cytoplasmic dynein 2 complex consists of two catalytic heavy chains (HCs) and a number of non-catalytic subunits presented by intermediate chains (ICs), light intermediate chains (LICs) and light chains (LCs). Among them, a heavy chain (DYNC2H1), two intermediate chains (DYNC2I2 and DYNC2I1), a light intermediate chain (DYNC2LI1), and a light chain (DYNLT2B) are unique to the dynein-2 complex, but a subset of light chains are also shared by dynein-1 and dynein-2 complexes. Dynein-2 complex is built around two copies of cytoplasmic dynein 2 heavy chain 1 (DYNC2H1). The C-terminal region forms the motor domain, which converts the energy from ATP hydrolysis into movement. Its N-terminal region forms the tail, an extended structure that binds the other subunits and holds the two heavy chains in a homodimer. Interacts with DYNC2H1 (via N-terminus); this interaction stabilizes the dynein-2 complex structure.

Its subcellular location is the cytoplasm. It is found in the cell projection. The protein localises to the cilium. It localises to the cytoskeleton. The protein resides in the cilium basal body. Its subcellular location is the cilium axoneme. It is found in the microtubule organizing center. The protein localises to the centrosome. In terms of biological role, acts as one of several non-catalytic accessory components of the cytoplasmic dynein 2 complex (dynein-2 complex), a motor protein complex that drives the movement of cargos along microtubules within cilia and flagella in concert with the intraflagellar transport (IFT) system, facilitating the assembly of these organelles. Involved in the regulation of ciliary length. The protein is Cytoplasmic dynein 2 light intermediate chain 1 (DYNC2LI1) of Bos taurus (Bovine).